Reading from the N-terminus, the 456-residue chain is Chitin synthase regulatory factor 1 (456 aa).

3 disordered regions span residues 1 to 20, 38 to 74, and 139 to 158; these read MPASTSIPETPSKLPDALLV, ESPLALEGSPLPTVSDVLPETNNAHEEVSSSSWSLSS, and SKPSLSSNSSDSSFSKSGSE. Low complexity predominate over residues 140–158; it reads KPSLSSNSSDSSFSKSGSE. Phosphoserine is present on residues serine 227 and serine 230. Sel1-like repeat units lie at residues 293 to 327, 328 to 364, 365 to 402, and 403 to 438; these read NFVPYELAELYKQRGTSQDLKSILPLYMLAASLGH, DRSSFLVGEAFFYGTYGARENKLRALQYYHLANDKGN, ADAMLALCKLYLRGLPGHIFPSSRRAFEYAHRAAMLGH, and APACYVLGKFYETGVGCVKDLAKSEAGFRAGLINDS.

In terms of biological role, involved in chitin biosynthesis. In Schizosaccharomyces pombe (strain 972 / ATCC 24843) (Fission yeast), this protein is Chitin synthase regulatory factor 1 (chr1).